The following is a 127-amino-acid chain: UPF0102 protein Geob_1494 (127 aa).

This sequence belongs to the UPF0102 family.

The polypeptide is UPF0102 protein Geob_1494 (Geotalea daltonii (strain DSM 22248 / JCM 15807 / FRC-32) (Geobacter daltonii)).